The following is a 146-amino-acid chain: MADQYHGVMQKIHDHTPNPTQILGFITLFVSGAILLLLTGLTLTGTVIGLVVLTPVLIFFSPILIPVATVLFVAVAGFLSAGGFGLAALSAISWLYNYIKGRHPPGADQIDYARMRIADTASHVKDYAREYGGYLQSKIQDAAPGA.

Residue Ala-2 is modified to N-acetylalanine. Helical transmembrane passes span 22–42, 56–76, and 77–97; these read ILGF…TGLT, VLIF…VAVA, and GFLS…WLYN. Residues 55 to 66 carry the Proline-knot motif; the sequence is PVLIFFSPILIP.

Belongs to the oleosin family. Expressed in pollen (at protein level).

It is found in the lipid droplet. The protein localises to the membrane. This chain is Oleosin, found in Pinus elliottii (Slash pine).